The following is a 141-amino-acid chain: Small ribosomal subunit protein bS6 (141 aa).

Residues 97–141 (TGQSEMLKAEENRSERRERRDRPEHADSADGDDSDNSDASDNADE) form a disordered region. The segment covering 103 to 124 (LKAEENRSERRERRDRPEHADS) has biased composition (basic and acidic residues). The segment covering 125–141 (ADGDDSDNSDASDNADE) has biased composition (acidic residues).

Belongs to the bacterial ribosomal protein bS6 family.

In terms of biological role, binds together with bS18 to 16S ribosomal RNA. This Pseudomonas fluorescens (strain ATCC BAA-477 / NRRL B-23932 / Pf-5) protein is Small ribosomal subunit protein bS6.